Consider the following 364-residue polypeptide: DNA polymerase IV (364 aa).

A UmuC domain is found at 8–189 (IIHIDMDCYF…LPLTKIPGVG (182 aa)). Mg(2+)-binding residues include D12 and D107. E108 is a catalytic residue.

This sequence belongs to the DNA polymerase type-Y family. As to quaternary structure, monomer. The cofactor is Mg(2+).

The protein resides in the cytoplasm. The catalysed reaction is DNA(n) + a 2'-deoxyribonucleoside 5'-triphosphate = DNA(n+1) + diphosphate. Its function is as follows. Poorly processive, error-prone DNA polymerase involved in untargeted mutagenesis. Copies undamaged DNA at stalled replication forks, which arise in vivo from mismatched or misaligned primer ends. These misaligned primers can be extended by PolIV. Exhibits no 3'-5' exonuclease (proofreading) activity. May be involved in translesional synthesis, in conjunction with the beta clamp from PolIII. In Shewanella woodyi (strain ATCC 51908 / MS32), this protein is DNA polymerase IV.